Reading from the N-terminus, the 311-residue chain is MKSSFSTVSSYSDHKFAVKDAPTTIRDSLRLTNAVEDPGYMTLSLISENKVDDLMFNSKMFQDHMVNDFRPKFSHADSSEIMITLNNLKNDILSTKNIRELESTDLRSEVAKQFAARRAELVSHLNASLRPLIDEVFSMEQRLKAFDAENADFVGKTKQYKSTFRSEVHSRIRAGQSKLDALRHGLQTEINSLEAIIEREFAQAANRLNQEVSNFKESFDASERNIKLQKKHVISGMNEKIKSFAESVAKYLPILKKNSEERRFNQMMMQKNLAEIMTVLSDNSEHFGDYCFSDLVPDTRIFDAIMTTKVD.

Residues 185 to 233 are a coiled coil; that stretch reads GLQTEINSLEAIIEREFAQAANRLNQEVSNFKESFDASERNIKLQKKHV.

Interacts with EB1.

It localises to the cytoplasm. Its subcellular location is the cytoskeleton. Functionally, giardins are involved in parasite attachment to the intestinal mucosa and in the cytoskeletal disassembly and reassembly that marks the transition from infectious trophozoite to transmissible cyst. They may interact with other cytoskeletal proteins such as microtubules in the microribbons or crossbridges, to maintain the integrity of the ventral disk. Involved in formation of the ventral disk. The chain is Giardin subunit gamma from Giardia intestinalis (Giardia lamblia).